The primary structure comprises 59 residues: UPF0434 protein VV1_2087 (59 aa).

Belongs to the UPF0434 family.

The polypeptide is UPF0434 protein VV1_2087 (Vibrio vulnificus (strain CMCP6)).